We begin with the raw amino-acid sequence, 528 residues long: Probable serine protease HtrA1 (528 aa).

The disordered stretch occupies residues 1–70 (MDTRVDTDNA…RPSGVQGSFV (70 aa)). The Cytoplasmic segment spans residues 1–178 (MDTRVDTDNA…DVLFGGKVSY (178 aa)). Residues 31–40 (NNGGPNGGGR) show a composition bias toward gly residues. Residues 179–199 (LALGILVAIALVIGGIGGVIG) traverse the membrane as a helical segment. Residues 200–528 (RKTAEVVDAF…LTVKPDPDST (329 aa)) lie on the Periplasmic side of the membrane. Catalysis depends on charge relay system residues His270, Asp306, and Ser387. The PDZ domain maps to 426–487 (LVANSLIKDG…VIVKVGNRAV (62 aa)).

It belongs to the peptidase S1C family. As to quaternary structure, the C-terminal region exhibits both monomeric and trimeric forms in solution.

It localises to the cell inner membrane. The catalysed reaction is Acts on substrates that are at least partially unfolded. The cleavage site P1 residue is normally between a pair of hydrophobic residues, such as Val-|-Val.. Essential protein that may act as a regulatory protease that is conditionally activated upon appropriate environmental triggers. The polypeptide is Probable serine protease HtrA1 (Mycobacterium tuberculosis (strain ATCC 25618 / H37Rv)).